A 525-amino-acid polypeptide reads, in one-letter code: MAAGEQVSNMFDTILVLDFGSQYSHLITRRLREFNIYAEMLPCTQKISELGWTPKGVILSGGPYSVYAEDAPHVDHAIFDLNVPILGICYGMQELAWINGKQVGRGDKREYGPATLKVIDDSNSLFKGMNDSTVWMSHGDKLHGLPTGYKTIATSDNSPYCGIVHETKPIYGIQFHPEVTHSTQGKTLLKNFAVDLCHAKQNWTMENFIDTEINRIRKLVGPTAEVIGAVSGGVDSTVASKLMTEAIGDRFHAILVDNGVLRLNEAANVKKTLVEGLGINLMVVDASEEFLSKLKGVTDPEKKRKIIGNTFIHVFEREAEKIKPKDGKEIQFLLQGTLYPDVIESISFKGPSQTIKTHHNVGGLLENMKLKLIEPLRELFKDEVRHLGELLGIPHDLVWRHPFPGPGIAIRVLGEVTKEQVEIARKADNIYIEEIKKAGLYNQISQAFACLLPVKSVGVMGDQRTYDQVIALRAIETTDFMTADWFPFEHSFLKKVASRIVNEVDGVARVTYDITSKPPATVEWE.

The region spanning 13–202 (TILVLDFGSQ…AVDLCHAKQN (190 aa)) is the Glutamine amidotransferase type-1 domain. Cysteine 89 functions as the Nucleophile in the catalytic mechanism. Catalysis depends on residues histidine 176 and glutamate 178. Residues 203-400 (WTMENFIDTE…LGIPHDLVWR (198 aa)) form the GMPS ATP-PPase domain. ATP is bound at residue 231–237 (SGGVDST). A Glycyl lysine isopeptide (Lys-Gly) (interchain with G-Cter in ubiquitin) cross-link involves residue lysine 241. Arginine 304 serves as a coordination point for XMP. Residue lysine 426 forms a Glycyl lysine isopeptide (Lys-Gly) (interchain with G-Cter in ubiquitin) linkage. 3 residues coordinate XMP: aspartate 462, lysine 517, and glutamate 523.

In terms of assembly, homodimer. Mg(2+) is required as a cofactor.

It is found in the cytoplasm. Its subcellular location is the cytosol. The catalysed reaction is XMP + L-glutamine + ATP + H2O = GMP + L-glutamate + AMP + diphosphate + 2 H(+). Its pathway is purine metabolism; GMP biosynthesis; GMP from XMP (L-Gln route): step 1/1. Catalyzes the conversion of xanthine monophosphate (XMP) to GMP in the presence of glutamine and ATP through an adenyl-XMP intermediate. This is GMP synthase [glutamine-hydrolyzing] from Saccharomyces cerevisiae (strain ATCC 204508 / S288c) (Baker's yeast).